We begin with the raw amino-acid sequence, 268 residues long: Tryptophan synthase alpha chain (268 aa).

Residues Glu-49 and Asp-60 each act as proton acceptor in the active site.

It belongs to the TrpA family. In terms of assembly, tetramer of two alpha and two beta chains.

The catalysed reaction is (1S,2R)-1-C-(indol-3-yl)glycerol 3-phosphate + L-serine = D-glyceraldehyde 3-phosphate + L-tryptophan + H2O. It functions in the pathway amino-acid biosynthesis; L-tryptophan biosynthesis; L-tryptophan from chorismate: step 5/5. In terms of biological role, the alpha subunit is responsible for the aldol cleavage of indoleglycerol phosphate to indole and glyceraldehyde 3-phosphate. The chain is Tryptophan synthase alpha chain from Escherichia coli (strain ATCC 8739 / DSM 1576 / NBRC 3972 / NCIMB 8545 / WDCM 00012 / Crooks).